Here is a 520-residue protein sequence, read N- to C-terminus: Putative transporter svop-1 (520 aa).

Topologically, residues 1–85 are cytoplasmic; it reads MGDKAILTEV…LGFGRFQLKL (85 aa). The chain crosses the membrane as a helical span at residues 86–106; that stretch reads SILTGMAWMADAMEMMLLSLI. Residues 107–120 are Extracellular-facing; that stretch reads SPALACEWGISSVQ. A helical transmembrane segment spans residues 121–141; it reads QALVTTCVFSGMMLSSTFWGK. Over 142-157 the chain is Cytoplasmic; it reads ICDRFGRRKGLTFSTL. Residues 158–178 form a helical membrane-spanning segment; that stretch reads VACIMGVISGMSPHFYVLLFF. Residue Arg-179 is a topological domain, extracellular. A helical membrane pass occupies residues 180–200; that stretch reads GLTGFGIGGVPQSVTLYAEFL. The Cytoplasmic portion of the chain corresponds to 201 to 208; it reads PTAQRAKC. A helical transmembrane segment spans residues 209–229; sequence VVLIESFWAIGAVFEALLAYF. Topologically, residues 230 to 237 are extracellular; sequence VMESFGWR. Residues 238-258 form a helical membrane-spanning segment; it reads ALMFLSSLPLGIFAVASFWLP. Topologically, residues 259–319 are cytoplasmic; that stretch reads ESARFDMASG…LLSPDLRKTT (61 aa). A helical membrane pass occupies residues 320-340; the sequence is ILLWCIWAITAFSYYGMVLFT. The Extracellular portion of the chain corresponds to 341–372; it reads TVLFQSHDECHGGLFSNGTQMEVCQPLTRSDY. Residues 373–393 traverse the membrane as a helical segment; that stretch reads FDLLSTTLAEFPGLIITVLII. Over 394-410 the chain is Cytoplasmic; the sequence is EWFGRKKTMALEYAVFA. The helical transmembrane segment at 411–431 threads the bilayer; the sequence is IFTFLLYFCLDRFTVTVLIFV. At 432 to 434 the chain is on the extracellular side; the sequence is ARA. Residues 435 to 455 form a helical membrane-spanning segment; it reads FISGAFQCAYVYTPEVYPTTL. At 456-461 the chain is on the cytoplasmic side; the sequence is RAVGLG. The chain crosses the membrane as a helical span at residues 462–487; the sequence is TCSAMARIGAIVTPFIAQVASEKSLS. The Extracellular segment spans residues 488-489; it reads LP. The helical transmembrane segment at 490-509 threads the bilayer; sequence IGIYGTAAILGLIASLSLPI. Over 510–520 the chain is Cytoplasmic; that stretch reads ETKGRQMMDSH.

This sequence belongs to the major facilitator superfamily.

It is found in the membrane. This Caenorhabditis elegans protein is Putative transporter svop-1.